We begin with the raw amino-acid sequence, 857 residues long: MSGRDNRGAGGGGGGHQPLSNAMGKLKEKLTRVGDELGYHRVESNLSTSNTATSLDTILPEDPFLFPQVSPQRHPQNTVRTQRLLEDEPPLSFRPLLEDDDINEPPTQQQQRTPLRASGSLELTPLPPPPTSLEIREHRDRQQRGAQGDELQRSKQSLKGSRVSFERRDTGNSNTNSNKAAESSDEDSFEEKRTGFQQQKATSVDHKGILKDLKHILANDNRRQFQAKKHVSLDVKGTRFLQDLLKESSSEEEFHKTRREFQGRKHQSLDPRVTFKLDKVLQGSSTDSDEEGEDAEHKRLIHRPKDITKPVIIDLKDLESESDEDFLTSRQHFQQQRSISTDSRKSRRLYEMDEMDNKRGENIRHAVPFVRQITEDGKPKLEVYRPTTNPIYIWTQVLAALSVSLGSLVVGFVSAYTSPALVSMTDRNITSFEVTQDAGSWVGGIMPLAGLAGGIAGGPLIEYLGRRNTILATAVPFIVSSLLIACAVNVAMVLCGRFLAGFCVGIASLSLPVYLGETVQPEVRGTLGLLPTAFGNIGILLCFVAGSFMNWSMLAFLGAALPVPFLILMFLIPETPRWFVGRGLEERARKALKWLRGKEADVEPELKGLMRSQADADRQASRNTMLELLKLNNLKPLSISLGLMFFQQFSGINAVIFYTVQIFKDAGSTIDGNLCTIIVGIVNFLATFIGIVLIDRAGRKILLYVSDIAMVLTLFVLGGFFYCKTYGPDVSHLGWLPLTCFVIYILGFSLGFGPIPWLMMGEILPAKIRGSAASVATAFNWFCTFVVTKTFQDLTVAMGAHGAFWLFGAICFVGLFFVIIYVPETQGKTLEDIERKMMGRVRRMSSVANIKPLSFNM.

2 disordered regions span residues 1-28 and 62-202; these read MSGRDNRGAGGGGGGHQPLSNAMGKLKE and DPFL…QKAT. Over 1–392 the chain is Cytoplasmic; sequence MSGRDNRGAG…VYRPTTNPIY (392 aa). A9 is subject to Phosphothreonine. G12 bears the Phosphoserine mark. The segment covering 69–81 has biased composition (polar residues); sequence VSPQRHPQNTVRT. Over residues 134 to 143 the composition is skewed to basic and acidic residues; sequence EIREHRDRQQ. Polar residues predominate over residues 171–181; it reads GNSNTNSNKAA. Phosphoserine is present on residues S248, S249, and S250. Disordered stretches follow at residues 249–269 and 280–299; these read SSEEEFHKTRREFQGRKHQSL and VLQGSSTDSDEEGEDAEHKR. 2 positions are modified to phosphoserine: S320 and S322. A disordered region spans residues 327–346; it reads LTSRQHFQQQRSISTDSRKS. The segment covering 330–341 has biased composition (polar residues); sequence RQHFQQQRSIST. Residues 393 to 413 traverse the membrane as a helical segment; it reads IWTQVLAALSVSLGSLVVGFV. At 414–440 the chain is on the extracellular side; sequence SAYTSPALVSMTDRNITSFEVTQDAGS. Residue N428 is glycosylated (N-linked (GlcNAc...) asparagine). Residues 441-461 form a helical membrane-spanning segment; the sequence is WVGGIMPLAGLAGGIAGGPLI. The Cytoplasmic segment spans residues 462–473; it reads EYLGRRNTILAT. A helical transmembrane segment spans residues 474–494; sequence AVPFIVSSLLIACAVNVAMVL. Residues 495 to 497 are Extracellular-facing; it reads CGR. Residues 498 to 518 traverse the membrane as a helical segment; sequence FLAGFCVGIASLSLPVYLGET. Topologically, residues 519 to 528 are cytoplasmic; it reads VQPEVRGTLG. Residues 529 to 549 traverse the membrane as a helical segment; it reads LLPTAFGNIGILLCFVAGSFM. N-linked (GlcNAc...) asparagine glycosylation is present at N550. Over 550–552 the chain is Extracellular; it reads NWS. A helical transmembrane segment spans residues 553 to 573; sequence MLAFLGAALPVPFLILMFLIP. Residues 574 to 636 lie on the Cytoplasmic side of the membrane; that stretch reads ETPRWFVGRG…ELLKLNNLKP (63 aa). A helical membrane pass occupies residues 637–657; the sequence is LSISLGLMFFQQFSGINAVIF. The Extracellular portion of the chain corresponds to 658 to 673; the sequence is YTVQIFKDAGSTIDGN. A helical transmembrane segment spans residues 674–694; it reads LCTIIVGIVNFLATFIGIVLI. Over 695-700 the chain is Cytoplasmic; sequence DRAGRK. Residues 701-721 form a helical membrane-spanning segment; sequence ILLYVSDIAMVLTLFVLGGFF. At 722-740 the chain is on the extracellular side; sequence YCKTYGPDVSHLGWLPLTC. The chain crosses the membrane as a helical span at residues 741–761; the sequence is FVIYILGFSLGFGPIPWLMMG. Topologically, residues 762 to 767 are cytoplasmic; it reads EILPAK. The chain crosses the membrane as a helical span at residues 768–788; that stretch reads IRGSAASVATAFNWFCTFVVT. Residues 789–801 are Extracellular-facing; the sequence is KTFQDLTVAMGAH. A helical membrane pass occupies residues 802–822; sequence GAFWLFGAICFVGLFFVIIYV. Over 823–857 the chain is Cytoplasmic; that stretch reads PETQGKTLEDIERKMMGRVRRMSSVANIKPLSFNM. Phosphoserine occurs at positions 845 and 846.

It belongs to the major facilitator superfamily. Sugar transporter (TC 2.A.1.1) family. Trehalose transporter subfamily. In terms of tissue distribution, expressed in perineurial glia of the outer layer of the nervous system that forms the blood brain barrier (at protein level). Expressed in the fat body (at protein level). May be specifically expressed in perineurial glia (at protein level). As to expression, may be specifically expressed in the fat body (at protein level).

Its subcellular location is the cell membrane. The protein localises to the vesicle. The enzyme catalyses alpha,alpha-trehalose(in) = alpha,alpha-trehalose(out). It catalyses the reaction D-glucose(out) = D-glucose(in). In terms of biological role, low-capacity facilitative transporter for trehalose. Can also transport glucose. Does not transport maltose, sucrose, lactose or fructose. Mediates the bidirectional transfer of trehalose. Responsible for the transport of trehalose synthesized in the fat body and the incorporation of trehalose into other tissues that require a carbon source, thereby regulating trehalose levels in the hemolymph. Required in glial cells of the blood brain barrier to fuel glycolysis but not required in neurons. Neurons rely on the citric acid cycle for their energy needs and utilise alanine and lactate, by-products of glial cell glycolysis released into the hemolymph, as fuel. Increased expression in glial cells of the blood brain barrier during starvation and increased cell surface localization enhances carbohydrate uptake to protect the central nervous system from restricted nutrient availability. The polypeptide is Trehalose transporter 1 (Drosophila melanogaster (Fruit fly)).